Reading from the N-terminus, the 424-residue chain is Hemagglutinin-esterase (424 aa).

A signal peptide spans 1-16 (MFLLPRFVLVSCIIGS). The tract at residues 7–127 (FVLVSCIIGS…SNDIWMQNKG (121 aa)) is esterase domain 1. Residues 17–392 (LGFDNPPTNV…PICVYDPLPI (376 aa)) are Virion surface-facing. The Nucleophile role is filled by Ser40. Cys44 and Cys65 are disulfide-bonded. Asn54, Asn89, Asn153, Asn236, and Asn301 each carry an N-linked (GlcNAc...) asparagine; by host glycan. 3 cysteine pairs are disulfide-bonded: Cys113-Cys162, Cys197-Cys276, and Cys205-Cys249. The tract at residues 128 to 266 (LFYTQLYKNM…GNYLAISNEL (139 aa)) is receptor binding. The segment at 267 to 379 (LLTVPTKAIC…RCPTAADINT (113 aa)) is esterase domain 2. A disulfide bridge links Cys307 with Cys312. Asn316 carries an N-linked (GlcNAc...) asparagine; by host glycan. Residues Asp326 and His329 each act as charge relay system in the active site. Cysteines 347 and 371 form a disulfide. The N-linked (GlcNAc...) asparagine; by host glycan is linked to Asn358. A helical membrane pass occupies residues 393–413 (ILLGILLGVAVIIIVVLLLYF). Topologically, residues 414 to 424 (MVDNGTRLHDA) are intravirion. An N-linked (GlcNAc...) asparagine; by host glycan is attached at Asn417.

This sequence belongs to the influenza type C/coronaviruses hemagglutinin-esterase family. Homodimer; disulfide-linked. Forms a complex with the M protein in the pre-Golgi. Associates then with S-M complex to form a ternary complex S-M-HE. Post-translationally, N-glycosylated in the host RER.

The protein resides in the virion membrane. It localises to the host cell membrane. The enzyme catalyses N-acetyl-9-O-acetylneuraminate + H2O = N-acetylneuraminate + acetate + H(+). It catalyses the reaction N-acetyl-4-O-acetylneuraminate + H2O = N-acetylneuraminate + acetate + H(+). Its function is as follows. Structural protein that makes short spikes at the surface of the virus. Contains receptor binding and receptor-destroying activities. Mediates de-O-acetylation of N-acetyl-4-O-acetylneuraminic acid, which is probably the receptor determinant recognized by the virus on the surface of erythrocytes and susceptible cells. This receptor-destroying activity is important for virus release as it probably helps preventing self-aggregation and ensures the efficient spread of the progeny virus from cell to cell. May serve as a secondary viral attachment protein for initiating infection, the spike protein being the major one. May become a target for both the humoral and the cellular branches of the immune system. In Bovine coronavirus (strain LSU-94LSS-051) (BCoV-LSU), this protein is Hemagglutinin-esterase.